A 259-amino-acid polypeptide reads, in one-letter code: Phosphatidylserine decarboxylase proenzyme (259 aa).

Residues Asp-86, His-142, and Ser-226 each act as charge relay system; for autoendoproteolytic cleavage activity in the active site. The active-site Schiff-base intermediate with substrate; via pyruvic acid; for decarboxylase activity is Ser-226. The residue at position 226 (Ser-226) is a Pyruvic acid (Ser); by autocatalysis.

Belongs to the phosphatidylserine decarboxylase family. PSD-B subfamily. Prokaryotic type I sub-subfamily. Heterodimer of a large membrane-associated beta subunit and a small pyruvoyl-containing alpha subunit. The cofactor is pyruvate. Is synthesized initially as an inactive proenzyme. Formation of the active enzyme involves a self-maturation process in which the active site pyruvoyl group is generated from an internal serine residue via an autocatalytic post-translational modification. Two non-identical subunits are generated from the proenzyme in this reaction, and the pyruvate is formed at the N-terminus of the alpha chain, which is derived from the carboxyl end of the proenzyme. The autoendoproteolytic cleavage occurs by a canonical serine protease mechanism, in which the side chain hydroxyl group of the serine supplies its oxygen atom to form the C-terminus of the beta chain, while the remainder of the serine residue undergoes an oxidative deamination to produce ammonia and the pyruvoyl prosthetic group on the alpha chain. During this reaction, the Ser that is part of the protease active site of the proenzyme becomes the pyruvoyl prosthetic group, which constitutes an essential element of the active site of the mature decarboxylase.

The protein resides in the cell membrane. It carries out the reaction a 1,2-diacyl-sn-glycero-3-phospho-L-serine + H(+) = a 1,2-diacyl-sn-glycero-3-phosphoethanolamine + CO2. Its pathway is phospholipid metabolism; phosphatidylethanolamine biosynthesis; phosphatidylethanolamine from CDP-diacylglycerol: step 2/2. Its function is as follows. Catalyzes the formation of phosphatidylethanolamine (PtdEtn) from phosphatidylserine (PtdSer). The polypeptide is Phosphatidylserine decarboxylase proenzyme (Geobacillus sp. (strain WCH70)).